The sequence spans 303 residues: Probable 5-dehydro-4-deoxyglucarate dehydratase (303 aa).

It belongs to the DapA family.

The enzyme catalyses 5-dehydro-4-deoxy-D-glucarate + H(+) = 2,5-dioxopentanoate + CO2 + H2O. It functions in the pathway carbohydrate acid metabolism; D-glucarate degradation; 2,5-dioxopentanoate from D-glucarate: step 2/2. The chain is Probable 5-dehydro-4-deoxyglucarate dehydratase from Pseudomonas syringae pv. tomato (strain ATCC BAA-871 / DC3000).